The primary structure comprises 242 residues: Transcription factor Spi-C (242 aa).

Positions 112–195 (LRLFEYLFES…IRRKLTYQFS (84 aa)) form a DNA-binding region, ETS.

It belongs to the ETS family. Binds DNA as a monomer. As to expression, expressed in lymphoid tissues, including spleen, bone marrow and thymus. According to PubMed:19037245, highly expressed in red pulp macrophages and, at lower, levels in B-cells, but not in other cells, including, monocytes, dendritic cells and other tissue macrophages. According to PubMed:10464163 expressed in pre- and mature B-cells but not in immature B-cells; according to PubMed:10187812 not expressed in pre- but predominantly in mature B-cells and at lower levels in macrophages.

The protein resides in the nucleus. Its function is as follows. Controls the development of red pulp macrophages required for red blood cells recycling and iron homeostasis. Transcription factor that binds to the PU-box, a purine-rich DNA sequence (5'-GAGGA[AT]-3') that can act as a lymphoid-specific enhancer. Regulates VCAM1 gene expression. The protein is Transcription factor Spi-C (Spic) of Mus musculus (Mouse).